Here is a 1255-residue protein sequence, read N- to C-terminus: MESPVVEGNSGEVATPTLPQPPTPVSSNIRVVCRVRPLTELEKGRNEHSIVHFFDSKSISIRANGPQFTFDRIFGYQETQSQIFEDVAEPIVNDFLDGYHGTIIAYGQTASGKTFTMVGDPDSHGIIPRVIESIFVGISKMREKDTSLSLAFCLKISALELYNEKLYDLYDASKSNLNIREHKQNGIYVEGISEIVITSIEEAYNFLNISNNNRAIASTKMSAASSRSHSVLMIELSQQNLSMESSKISKLFLVDLAGSERAHKTGAEGDRMQEAKNINLSLSALGKVINALTCGANYVPYRDSKLTRVLQDSLGGNSKTSLIINCSPSNNNEHETITTLQFGTRAKTIKNQPKINKKITYHELELFIIKLAKDLEKSRKECEEITRSKNLEINNLLIQLENNQKMVVESNQKLELLNSQISSNHSFDNTFKEIENTCENSKIIFDDLNDHINNNNNVDENNNTNNNDNNNNDNNNNNQYQEESNQYQQENNQKDGDQNNSSFDSIKVEDLRDLDDEPDIEDIILNSTLGNISDDDDDDDDHHSNNNNVDDNNNGEINNDSDGYLNRSLKDIKIPEISDLNDHNINNNNNNNNNINNDNNSNSGGLRVSTSYITSSPNLSPSKSMDVNNSPPLFSYFKTKDFPPSSDENDKFFNDLIAKGENEQQQQQQQHNDDDEDIKSTTSNATTTTITTIDMNASHPSGIDDPIEFTIIKSDKTITSTIERETIQPSSLSNSTSLLDIETVESSTLPAPPPVTTTTTLTTVTTTKLTKTTNIPSNTNDINSIDDFGFSKIEEEGSSSNRKPNDTAILSFGDDDDEENEDNENEDVIVDSDEDTHSGKNNLLNTFKNDHHRGDFGATPTKSIFNKNGNITIKEFETPQQQQQQQQQQQQQQQQQQQQQQPLILQTTSTNPTIISIKSNKEPSPSSSTTTSIKKKNFNKRRSWIIFTIILTITLVSSSLLCLYLPEYKERLVQRRGYLNKLGIYSDYPTNEKISLAQHNQISLAKELYGGNSKQYYDEMSSFNTAYNHLIEMNHLETAVSKIFGSAIDLRFSGDDVINSIECKRAIHKLKTNNYVNGDLDQQQQQHNYITKIDQLSEQSKEQNQLIENFKLDLKNKTSEIEKLEKEIKQKDNKIKEKEEKIELIESRVLNEEKGGEKVLEDQIISLRNDKNTLSTQILNLEGDKKSLGVLVIKLNSDKTEIQNEVKELKRKVQELEDAPIALIPNPFVKWVKSFYVEKKSWFVENIYKIWNWFK.

The disordered stretch occupies residues 1 to 26 (MESPVVEGNSGEVATPTLPQPPTPVS). In terms of domain architecture, Kinesin motor spans 28-349 (NIRVVCRVRP…LQFGTRAKTI (322 aa)). 107-114 (GQTASGKT) lines the ATP pocket. Low complexity-rich tracts occupy residues 454–491 (NNNN…QQEN), 545–563 (NNNN…DSDG), and 583–603 (HNIN…NSNS). Disordered regions lie at residues 454-503 (NNNN…NSSF), 530-564 (GNIS…SDGY), 579-628 (DLND…MDVN), 661-686 (ENEQ…SNAT), 795-864 (EEGS…TKSI), and 915-934 (ISIK…TSIK). Over residues 608–628 (VSTSYITSSPNLSPSKSMDVN) the composition is skewed to polar residues. Positions 813–834 (GDDDDEENEDNENEDVIVDSDE) are enriched in acidic residues. Residues 915–932 (ISIKSNKEPSPSSSTTTS) show a composition bias toward low complexity. The chain crosses the membrane as a helical span at residues 945 to 965 (IIFTIILTITLVSSSLLCLYL). A coiled-coil region spans residues 1088 to 1223 (NYITKIDQLS…QELEDAPIAL (136 aa)).

This sequence belongs to the TRAFAC class myosin-kinesin ATPase superfamily. Kinesin family.

The protein resides in the nucleus membrane. It is found in the cytoplasm. Its subcellular location is the cytoskeleton. Functionally, microtubule-associated force-producing protein that plays a role in organelle transport. Its motor activity is directed toward the microtubule's plus end. May be involved in cell motility or cell differentiation during prestalk formation. In Dictyostelium discoideum (Social amoeba), this protein is Kinesin-related protein 7 (kif7).